We begin with the raw amino-acid sequence, 327 residues long: Tetraacyldisaccharide 4'-kinase (327 aa).

56–63 (FVGGTGKT) is an ATP binding site.

This sequence belongs to the LpxK family.

The enzyme catalyses a lipid A disaccharide + ATP = a lipid IVA + ADP + H(+). Its pathway is glycolipid biosynthesis; lipid IV(A) biosynthesis; lipid IV(A) from (3R)-3-hydroxytetradecanoyl-[acyl-carrier-protein] and UDP-N-acetyl-alpha-D-glucosamine: step 6/6. In terms of biological role, transfers the gamma-phosphate of ATP to the 4'-position of a tetraacyldisaccharide 1-phosphate intermediate (termed DS-1-P) to form tetraacyldisaccharide 1,4'-bis-phosphate (lipid IVA). The chain is Tetraacyldisaccharide 4'-kinase from Halorhodospira halophila (strain DSM 244 / SL1) (Ectothiorhodospira halophila (strain DSM 244 / SL1)).